A 546-amino-acid polypeptide reads, in one-letter code: CTP synthase (546 aa).

The segment at Met1–Leu266 is amidoligase domain. Ser14 contacts CTP. A UTP-binding site is contributed by Ser14. Residues Ser15–Ile20 and Asp72 contribute to the ATP site. Mg(2+)-binding residues include Asp72 and Glu140. CTP contacts are provided by residues Asp147–Glu149, Lys187–Gln192, and Lys223. Residues Lys187–Gln192 and Lys223 contribute to the UTP site. Lys239–Val241 contacts ATP. Positions Val291 to Arg542 constitute a Glutamine amidotransferase type-1 domain. An L-glutamine-binding site is contributed by Gly352. The active-site Nucleophile; for glutamine hydrolysis is the Cys379. Residues Leu380–Gln383, Glu403, and Arg470 each bind L-glutamine. Catalysis depends on residues His515 and Glu517.

The protein belongs to the CTP synthase family. As to quaternary structure, homotetramer.

The enzyme catalyses UTP + L-glutamine + ATP + H2O = CTP + L-glutamate + ADP + phosphate + 2 H(+). The catalysed reaction is L-glutamine + H2O = L-glutamate + NH4(+). It catalyses the reaction UTP + NH4(+) + ATP = CTP + ADP + phosphate + 2 H(+). Its pathway is pyrimidine metabolism; CTP biosynthesis via de novo pathway; CTP from UDP: step 2/2. With respect to regulation, allosterically activated by GTP, when glutamine is the substrate; GTP has no effect on the reaction when ammonia is the substrate. The allosteric effector GTP functions by stabilizing the protein conformation that binds the tetrahedral intermediate(s) formed during glutamine hydrolysis. Inhibited by the product CTP, via allosteric rather than competitive inhibition. Catalyzes the ATP-dependent amination of UTP to CTP with either L-glutamine or ammonia as the source of nitrogen. Regulates intracellular CTP levels through interactions with the four ribonucleotide triphosphates. This is CTP synthase from Shewanella sp. (strain ANA-3).